Consider the following 268-residue polypeptide: Phosphatidylglycerol--prolipoprotein diacylglyceryl transferase (268 aa).

A run of 4 helical transmembrane segments spans residues 14-34 (LGPI…FAGW), 57-77 (LTFY…IIFY), 90-110 (FFLW…LIAF), and 117-137 (IGAN…IGLG). Residue Arg140 participates in a 1,2-diacyl-sn-glycero-3-phospho-(1'-sn-glycerol) binding. A run of 3 helical transmembrane segments spans residues 174 to 194 (QLFE…LVTI), 200 to 220 (YLVL…CEFF), and 238 to 258 (GQIL…AVFI).

The protein belongs to the Lgt family.

It is found in the cell inner membrane. It catalyses the reaction L-cysteinyl-[prolipoprotein] + a 1,2-diacyl-sn-glycero-3-phospho-(1'-sn-glycerol) = an S-1,2-diacyl-sn-glyceryl-L-cysteinyl-[prolipoprotein] + sn-glycerol 1-phosphate + H(+). It functions in the pathway protein modification; lipoprotein biosynthesis (diacylglyceryl transfer). Its function is as follows. Catalyzes the transfer of the diacylglyceryl group from phosphatidylglycerol to the sulfhydryl group of the N-terminal cysteine of a prolipoprotein, the first step in the formation of mature lipoproteins. The polypeptide is Phosphatidylglycerol--prolipoprotein diacylglyceryl transferase (Francisella tularensis subsp. holarctica (strain FTNF002-00 / FTA)).